The following is a 275-amino-acid chain: Large ribosomal subunit protein uL2 (275 aa).

The segment at Val223–Lys275 is disordered.

It belongs to the universal ribosomal protein uL2 family. As to quaternary structure, part of the 50S ribosomal subunit. Forms a bridge to the 30S subunit in the 70S ribosome.

In terms of biological role, one of the primary rRNA binding proteins. Required for association of the 30S and 50S subunits to form the 70S ribosome, for tRNA binding and peptide bond formation. It has been suggested to have peptidyltransferase activity; this is somewhat controversial. Makes several contacts with the 16S rRNA in the 70S ribosome. This Shewanella piezotolerans (strain WP3 / JCM 13877) protein is Large ribosomal subunit protein uL2.